We begin with the raw amino-acid sequence, 510 residues long: MYRALWLLARSRRLVRPPASALASAPGLSGAAVPSFWPPNAARMASQNSFRIEYDTFGELKVPNDKYYGAQTVRSTMNFKIGGVTERMPTPVIKAFGILKRAAAEVNQDYGLDPKIANAIMKAADEVAEGKLNDHFPLVVWQTGSGTQTNMNVNEVISNRAIEMLGGELGSKIPVHPNDHVNKSQSSNDTFPTAMHIAAAIEVHEVLLPGLQKLHDALDAKSKEFAQIIKIGRTHTQDAVPLTLGQEFSGYVQQVKYAVTRIKAAMPRIYELAAGGTAVGTGLNTRIGFAEKVAAKVAALTGLPFVTAPNKFEALAAHDALVELSGAMNTTACSLMKIANDIRFLGSGPRSGLGELILPENEPGSSIMPGKVNPTQCEAMTMVAAQVMGNHVAVTVGGSNGHFELNVFKPMMIKNVLHSARLLGDASVSFTENCVVGIQANTERINKLMNESLMLVTALNPHIGYDKAAKIAKTAHKNGSTLKETAIELGYLTAEQFDEWVKPKDMLGPK.

Residues 1–44 constitute a mitochondrion transit peptide; sequence MYRALWLLARSRRLVRPPASALASAPGLSGAAVPSFWPPNAARM. An N6-acetyllysine; alternate mark is found at Lys61, Lys66, and Lys80. Lys61, Lys66, and Lys80 each carry N6-succinyllysine; alternate. Residues Thr85 and Thr90 each carry the phosphothreonine modification. N6-acetyllysine is present on Lys94. N6-acetyllysine; alternate is present on residues Lys115 and Lys122. N6-succinyllysine; alternate occurs at positions 115 and 122. Residues 145–147, 176–179, and 186–188 contribute to the substrate site; these read SGT, HPND, and SSN. Lys213 bears the N6-acetyllysine mark. Lys223 carries the post-translational modification N6-acetyllysine; alternate. Position 223 is an N6-succinyllysine; alternate (Lys223). Thr234 contributes to the substrate binding site. The active-site Proton donor/acceptor is the His235. Thr236 bears the Phosphothreonine mark. Lys256 carries the N6-acetyllysine modification. N6-acetyllysine; alternate is present on Lys292. The residue at position 292 (Lys292) is an N6-succinyllysine; alternate. Ser365 is a catalytic residue. Substrate is bound by residues Ser366 and 371–373; that span reads KVN. Ser366 carries the post-translational modification Phosphoserine. An N6-succinyllysine mark is found at Lys467 and Lys473. N6-acetyllysine is present on Lys502.

Belongs to the class-II fumarase/aspartase family. Fumarase subfamily. In terms of assembly, homotetramer. Interacts with H2AZ1. Phosphorylation at Thr-236 by PRKDC in response to DNA damage promotes translocation to the nucleus and recruitment to DNA double-strand breaks (DSBs).

It is found in the mitochondrion. Its subcellular location is the cytoplasm. The protein resides in the cytosol. It localises to the nucleus. The protein localises to the chromosome. It catalyses the reaction (S)-malate = fumarate + H2O. It functions in the pathway carbohydrate metabolism; tricarboxylic acid cycle; (S)-malate from fumarate: step 1/1. Its function is as follows. Catalyzes the reversible stereospecific interconversion of fumarate to L-malate. Experiments in other species have demonstrated that specific isoforms of this protein act in defined pathways and favor one direction over the other. In terms of biological role, catalyzes the hydration of fumarate to L-malate in the tricarboxylic acid (TCA) cycle to facilitate a transition step in the production of energy in the form of NADH. Functionally, catalyzes the dehydration of L-malate to fumarate. Fumarate metabolism in the cytosol plays a role during urea cycle and arginine metabolism; fumarate being a by-product of the urea cycle and amino-acid catabolism. Also plays a role in DNA repair by promoting non-homologous end-joining (NHEJ). In response to DNA damage and phosphorylation by PRKDC, translocates to the nucleus and accumulates at DNA double-strand breaks (DSBs): acts by catalyzing formation of fumarate, an inhibitor of KDM2B histone demethylase activity, resulting in enhanced dimethylation of histone H3 'Lys-36' (H3K36me2). This is Fumarate hydratase, mitochondrial from Macaca fascicularis (Crab-eating macaque).